A 139-amino-acid chain; its full sequence is Putative lipoprotein MIP_01412 (139 aa).

Positions 1 to 19 are cleaved as a signal peptide; sequence MRNRTVAAGAVLTAALLGA. C20 carries the N-palmitoyl cysteine lipid modification. C20 is lipidated: S-diacylglycerol cysteine.

The protein belongs to the mycobacterial 19 kDa antigen family.

The protein localises to the cell membrane. This is Putative lipoprotein MIP_01412 from Mycobacterium indicus pranii (strain DSM 45239 / MTCC 9506).